Here is a 774-residue protein sequence, read N- to C-terminus: Acetyl-CoA decarbonylase/synthase complex subunit alpha (774 aa).

Residues Cys73, Cys76, Cys77, Cys79, Cys84, and Cys94 each coordinate [4Fe-4S] cluster. Residue His117 participates in CO binding. [Ni-4Fe-4S] cluster-binding residues include His251, Cys279, and Cys318. 4Fe-4S ferredoxin-type domains lie at 398-427 (LNEVVELAKQCTECGWCNRNCPNAFKVKEA) and 436-466 (FKGFIDLYKRCYGCGRCEAICPRNLPIVSMT). Residues Cys408, Cys411, Cys414, Cys418, Cys446, Cys449, Cys452, and Cys456 each contribute to the [4Fe-4S] cluster site. Cys514, Cys543, and Cys578 together coordinate [Ni-4Fe-4S] cluster.

It belongs to the Ni-containing carbon monoxide dehydrogenase family. As to quaternary structure, heterotetramer of two alpha and two epsilon subunits. The ACDS complex is made up of alpha, epsilon, beta, gamma and delta subunits with a probable stoichiometry of (alpha(2)epsilon(2))(4)-beta(8)-(gamma(1)delta(1))(8). Requires [4Fe-4S] cluster as cofactor. The cofactor is [Ni-4Fe-4S] cluster.

It carries out the reaction CO + 2 oxidized [2Fe-2S]-[ferredoxin] + H2O = 2 reduced [2Fe-2S]-[ferredoxin] + CO2 + 2 H(+). Part of the ACDS complex that catalyzes the reversible cleavage of acetyl-CoA, allowing autotrophic growth from CO(2). The alpha-epsilon subcomponent functions as a carbon monoxide dehydrogenase. The protein is Acetyl-CoA decarbonylase/synthase complex subunit alpha of Methanocaldococcus jannaschii (strain ATCC 43067 / DSM 2661 / JAL-1 / JCM 10045 / NBRC 100440) (Methanococcus jannaschii).